The following is a 146-amino-acid chain: Snake venom vascular endothelial growth factor toxin TfsvVEGF (146 aa).

The signal sequence occupies residues 1-24; that stretch reads MAAYLLAVAILFCIQGWPSGTVQG. Position 25 is a pyrrolidone carboxylic acid (Gln25). 3 cysteine pairs are disulfide-bonded: Cys38/Cys80, Cys69/Cys115, and Cys73/Cys117. Over residues 118–139 the composition is skewed to basic and acidic residues; sequence RPRSPGDVNNGKDKRNPEEGGP. Residues 118-146 form a disordered region; sequence RPRSPGDVNNGKDKRNPEEGGPRARFPFV.

It belongs to the PDGF/VEGF growth factor family. Snake venom VEGF subfamily. In terms of assembly, homodimer; disulfide-linked. Interacts with VEGF receptor-1 (FLT1) with a high affinity, whereas it binds to VEGF receptor-2 (KDR) with a low affinity. Does not bind VEGF receptor-3 (FLT4). As to expression, expressed by the venom gland.

It is found in the secreted. Snake venom VEGFs may contribute to venom dispersion and prey subjugation by inducing vascular permeability and hypotension. This protein strongly increases vascular permeability, and weakly stimulates angiogenesis. Interacts with VEGF receptor-1 (FLT1) with a high affinity, whereas it binds to VEGF receptor-2 (KDR) with a low affinity. Stimulates autophosphorylation of VEGF receptor-1 (VEGFR-1/FLT1), and VEGF receptor-2 (VEGFR-2/KDR). In Protobothrops flavoviridis (Habu), this protein is Snake venom vascular endothelial growth factor toxin TfsvVEGF.